A 523-amino-acid polypeptide reads, in one-letter code: Signal peptide peptidase-like 3 (523 aa).

A signal peptide spans 1–35 (MAFPAPSSSSPRRRGRGLAYLLVSVLLLASRVPGA). Residues 36-207 (AGADSEFEDG…EKPSFDGAIP (172 aa)) are Lumenal-facing. One can recognise a PA domain in the interval 110-182 (SAPLASSIAV…SQSAGRKILS (73 aa)). A glycan (N-linked (GlcNAc...) asparagine) is linked at N159. The helical transmembrane segment at 208 to 228 (FLWLMAVGSVACASVWSFVVV) threads the bilayer. The Cytoplasmic portion of the chain corresponds to 229–254 (GDEDKNAPTLGGEEAADSEIVELQTK). Residues 255 to 272 (TALVFIVTASLVLLFLFF) traverse the membrane as a helical segment. At 273 to 275 (FKS) the chain is on the lumenal side. A helical transmembrane segment spans residues 276–298 (TWSAWLLVVLFCLSGLQGLHYVA). The Cytoplasmic portion of the chain corresponds to 299-321 (STLIVRTCDRCREAKVALPVLGN). A helical transmembrane segment spans residues 322–342 (VTVVTLVILPLALIFVVVWAV). At 343 to 347 (HQNSP) the chain is on the lumenal side. A helical membrane pass occupies residues 348 to 368 (FAWVGQDLMGICMMILVLQVV). Over 369-377 (HLPNIKVAT) the chain is Cytoplasmic. The helical transmembrane segment at 378–398 (ALLVSAFMYDIFWVFISPFIF) threads the bilayer. D387 is an active-site residue. Over 399–430 (KKSVMITVARGSDEGPSLPMVLKMPKEFDTWN) the chain is Lumenal. A helical transmembrane segment spans residues 431–451 (GYDMIGFGDILFPGLLVAFSF). Residue D439 is part of the active site. Over 452-465 (RYDRANGKDLTDGY) the chain is Cytoplasmic. A helical transmembrane segment spans residues 466–486 (FLCLMIGYAFGLSCTYVGLYL). The Lumenal segment spans residues 487-489 (MKS). A helical transmembrane segment spans residues 490-510 (GQPALLYLVPSTLGTIVTLGA). The PAL signature appears at 492–494 (PAL). Residues 511–523 (KRGELSQLWNAKV) are Cytoplasmic-facing.

Belongs to the peptidase A22B family. Glycosylated.

The protein localises to the endosome membrane. Its function is as follows. Intramembrane-cleaving aspartic protease (I-CLiP) that cleaves type II membrane signal peptides in the hydrophobic plane of the membrane. In Oryza sativa subsp. japonica (Rice), this protein is Signal peptide peptidase-like 3 (SPPL3).